Reading from the N-terminus, the 465-residue chain is Glutamate--tRNA ligase (465 aa).

The 'HIGH' region signature appears at 10–20 (PSPTGQLHIGG). Residues C99, C101, C126, and E128 each contribute to the Zn(2+) site. A 'KMSKS' region motif is present at residues 236-240 (KLSKR). K239 serves as a coordination point for ATP.

This sequence belongs to the class-I aminoacyl-tRNA synthetase family. Glutamate--tRNA ligase type 1 subfamily. In terms of assembly, monomer. Zn(2+) is required as a cofactor.

It localises to the cytoplasm. It catalyses the reaction tRNA(Glu) + L-glutamate + ATP = L-glutamyl-tRNA(Glu) + AMP + diphosphate. Its function is as follows. Catalyzes the attachment of glutamate to tRNA(Glu) in a two-step reaction: glutamate is first activated by ATP to form Glu-AMP and then transferred to the acceptor end of tRNA(Glu). The chain is Glutamate--tRNA ligase from Lawsonia intracellularis (strain PHE/MN1-00).